The following is a 179-amino-acid chain: UPF0302 protein YpiB (179 aa).

The protein belongs to the UPF0302 family.

This is UPF0302 protein YpiB (ypiB) from Bacillus subtilis (strain 168).